Here is a 183-residue protein sequence, read N- to C-terminus: NEDD8-conjugating enzyme Ubc12 (183 aa).

Residue methionine 1 is modified to N-acetylmethionine. The tract at residues 1–28 (MIKLFSLKQQKKEEESAGGTKGSSKKAS) is disordered. The 145-residue stretch at 29 to 173 (AAQLRIQKDI…VQRSMRGGYI (145 aa)) folds into the UBC core domain. Cysteine 111 serves as the catalytic Glycyl thioester intermediate.

Belongs to the ubiquitin-conjugating enzyme family. UBC12 subfamily. In terms of processing, the acetylation of Met-1 increases affinity for DCUN1D1 by about 2 orders of magnitude and is crucial for NEDD8 transfer to cullins.

The catalysed reaction is [E1 NEDD8-activating enzyme]-S-[NEDD8 protein]-yl-L-cysteine + [E2 NEDD8-conjugating enzyme]-L-cysteine = [E1 NEDD8-activating enzyme]-L-cysteine + [E2 NEDD8-conjugating enzyme]-S-[NEDD8-protein]-yl-L-cysteine.. It functions in the pathway protein modification; protein neddylation. Functionally, accepts the ubiquitin-like protein NEDD8 from the UBA3-NAE1 E1 complex and catalyzes its covalent attachment to other proteins. The specific interaction with the E3 ubiquitin ligase rbx1, but not rbx2, suggests that the rbx1-ube2m complex neddylates specific target proteins, such as cul1, cul2, cul3 and cul4. Involved in cell proliferation. The sequence is that of NEDD8-conjugating enzyme Ubc12 (ube2m) from Xenopus tropicalis (Western clawed frog).